The following is a 470-amino-acid chain: Leucine-rich repeat extensin-like protein 6 (470 aa).

Positions 1–28 (MREDTFFFQWWFLVSGLSFIFLLPQAFT) are cleaved as a signal peptide. N83 carries N-linked (GlcNAc...) asparagine glycosylation. LRR repeat units lie at residues 98–122 (VLTVAGIDLNHANIAGYLPLELGLL), 123–146 (TDLALFHINSNRFQGQLPKTLKCL), 147–170 (HLLHELDVSNNKLSGEFPSVIFSL), 171–194 (PSLKFLDIRFNEFQGDVPSQLFDL), 196–217 (LDALFINDNKFQFRLPRNIGNS), 219–241 (VSVLVLANNDLQGSCVPPSFYKM), 243–265 (KTLHEIIITNSQLTGCLNREIGL), 266–290 (LNQLTVFDVSYNNLVGSLPETIGDM), 291–314 (KSLEQLNIAHNKFSGYIPESICRL), and 316–337 (RLENFTYSYNFFSGEPPACLRL). Residue N319 is glycosylated (N-linked (GlcNAc...) asparagine). Residues 378–411 (SPPPPPPPPPPPPPPPPPPPPPPPPPPPPPYVYP) form a disordered region. Residues 378 to 470 (SPPPPPPPPP…CNDLPTPVHY (93 aa)) form a contains the Ser-Pro(4) repeats region.

Post-translationally, hydroxylated on proline residues in the S-P-P-P-P repeat. In terms of processing, O-glycosylated on hydroxyprolines. As to expression, expressed in roots.

Its subcellular location is the secreted. The protein resides in the cell wall. Modulates cell morphogenesis by regulating cell wall formation and assembly, and/or growth polarization. This is Leucine-rich repeat extensin-like protein 6 (LRX6) from Arabidopsis thaliana (Mouse-ear cress).